We begin with the raw amino-acid sequence, 225 residues long: LexA repressor (225 aa).

The segment at residues 26–46 (YEEMKDSLNLKSKSGIHRLIS) is a DNA-binding region (H-T-H motif). Catalysis depends on for autocatalytic cleavage activity residues S146 and K184.

This sequence belongs to the peptidase S24 family. Homodimer.

The enzyme catalyses Hydrolysis of Ala-|-Gly bond in repressor LexA.. Its function is as follows. Represses a number of genes involved in the response to DNA damage (SOS response), including recA and lexA. In the presence of single-stranded DNA, RecA interacts with LexA causing an autocatalytic cleavage which disrupts the DNA-binding part of LexA, leading to derepression of the SOS regulon and eventually DNA repair. This is LexA repressor from Pelagibacter ubique (strain HTCC1062).